The chain runs to 514 residues: ATP synthase subunit alpha (514 aa).

170 to 177 (GDRQIGKT) lines the ATP pocket.

Belongs to the ATPase alpha/beta chains family. As to quaternary structure, F-type ATPases have 2 components, CF(1) - the catalytic core - and CF(0) - the membrane proton channel. CF(1) has five subunits: alpha(3), beta(3), gamma(1), delta(1), epsilon(1). CF(0) has three main subunits: a(1), b(2) and c(9-12). The alpha and beta chains form an alternating ring which encloses part of the gamma chain. CF(1) is attached to CF(0) by a central stalk formed by the gamma and epsilon chains, while a peripheral stalk is formed by the delta and b chains.

Its subcellular location is the cell inner membrane. It carries out the reaction ATP + H2O + 4 H(+)(in) = ADP + phosphate + 5 H(+)(out). In terms of biological role, produces ATP from ADP in the presence of a proton gradient across the membrane. The alpha chain is a regulatory subunit. The polypeptide is ATP synthase subunit alpha (Pseudomonas syringae pv. tomato (strain ATCC BAA-871 / DC3000)).